The chain runs to 896 residues: Bifunctional glutamine synthetase adenylyltransferase/adenylyl-removing enzyme (896 aa).

An adenylyl removase region spans residues 1–411 (MSDNRLDTAR…LFNEILSEPE (411 aa)). Residues 417 to 896 (NSEWQWAWQE…EVFGEEAATA (480 aa)) form an adenylyl transferase region.

The protein belongs to the GlnE family. Requires Mg(2+) as cofactor.

The enzyme catalyses [glutamine synthetase]-O(4)-(5'-adenylyl)-L-tyrosine + phosphate = [glutamine synthetase]-L-tyrosine + ADP. It catalyses the reaction [glutamine synthetase]-L-tyrosine + ATP = [glutamine synthetase]-O(4)-(5'-adenylyl)-L-tyrosine + diphosphate. Functionally, involved in the regulation of glutamine synthetase GlnA, a key enzyme in the process to assimilate ammonia. When cellular nitrogen levels are high, the C-terminal adenylyl transferase (AT) inactivates GlnA by covalent transfer of an adenylyl group from ATP to specific tyrosine residue of GlnA, thus reducing its activity. Conversely, when nitrogen levels are low, the N-terminal adenylyl removase (AR) activates GlnA by removing the adenylyl group by phosphorolysis, increasing its activity. The regulatory region of GlnE binds the signal transduction protein PII (GlnB) which indicates the nitrogen status of the cell. This is Bifunctional glutamine synthetase adenylyltransferase/adenylyl-removing enzyme from Neisseria meningitidis serogroup A / serotype 4A (strain DSM 15465 / Z2491).